A 264-amino-acid chain; its full sequence is Putative ankyrin repeat domain-containing protein 19 (264 aa).

ANK repeat units lie at residues 67 to 96 (KDRTVLHLTCAHGRVEVVTLLLSRRCQINI), 100 to 129 (LNRTPLMKAVHCQEEACAIILLEHGANPNI), 133 to 162 (YSNTALHYAVYNKGTSLAEKLLSHHANIEA), 166 to 195 (EGNTPLLFAINSRRQQIVEFLLKNQANLHA), and 199 to 228 (FRRTALMLAVQHNSSSIVSLLLQQNINIFS).

In Homo sapiens (Human), this protein is Putative ankyrin repeat domain-containing protein 19 (ANKRD19P).